A 1216-amino-acid chain; its full sequence is MKLIPFLSEEEIQKLQEAEANSSKEQKKTAEQIEAIYTSGQNILVSASAGSGKTFVMAERILNQLARGVEISQLFISTFTVKAATELKERLEKKISKKIQETDDVDLKQHLGRQLADLPNAAIGTMDSFTQKFLGKHGYLLDIAPNFRILQNQSEQLLLENEVFHEVFEAHYQGKQKETFSHLLKNFAGRGKDERGLRQQVYKIYDFLQSTSNPQKWLSESFLKGFEKADFTSEKEKLTEQIKQALWDLESFFRYHLDNDAKEFAKAAYLENVQLILDEIGSLNQESDSQAYQAVLARVVAISKEKNGRALTNASRKADLKPLADAYNEERKTQFAKLGQLSDQITILDYQERYHQDTWELAKTFQTFMSHFVEAYRQRKRQENAFEFADISHYTIEILENFPQVRESYQERFHEVMVDEYQDTNHIQERMLELLSNGHNRFMVGDIKQSIYRFRQADPQIFNEKFQRYAQNPQEGKLILLKANFRSSSEVLSATNDVFERLMDQEVGEINYDNKHQLVFANTKLTPNPDNKAEFLLYDKDDTGEEEESQTETKLTGEMRLVIKEILKLHQEKGVAFKEIALLTSSRSRNDQILLALSEYGIPVKTDGEQNNYLQSLEVQVMLDTLRVIHNPLQDYALVALMKSPMFGFDEDELARLSLQKAEDKVHENLYEKLVNAQKMASSQKGLIHTALAEKLKQFMDILASWRLYAKTHSLYDLIWKIYNDRFYYDYVGALPNGPARQANLYALALRADQFEKSNFKGLSRFIRMIDQVLEAQHDLASVAVAPPKDAVELMTIHKSKGLEFPYVFILNMDQDFNKQDSMSEVILSRQNGLGVKYIAKMETGAVEDHYPKTIKLSIPSLTYRQNEEELQLASYSEQMRLLYVAMTRAEKKLYLVGKGSREKLEVKQYPAAKNGKLNSNTRLQARNFQDWLWAISKVFTKDKLNFSYRFIGEDQLTREAIGELETKSPLQDSSQADNRQSDTIKEALEMLKEVEVYNTLHRAAIELPSVQTPSQIKKFYEPVMDMEGVEIAGQGQSVGKKISFDLPDFSTKEKVTGAEIGSATHELMQRIDLSQQLTLASLTETLKQVQTSQAVRDKINLDKILAFFDTVLGQEILANTDHLYREQPFSMLKRDQKSQEDFVVRGILDGYLLYENKIVLFDYKTDRYDEPSQLVDRYRGQLALYEEALSRAYSIENIEKYLILLGKDEVQVVKV.

Positions 26–488 (QKKTAEQIEA…ILLKANFRSS (463 aa)) constitute a UvrD-like helicase ATP-binding domain. 47 to 54 (ASAGSGKT) lines the ATP pocket. A UvrD-like helicase C-terminal domain is found at 515-802 (KHQLVFANTK…ELMTIHKSKG (288 aa)).

It belongs to the helicase family. AddA subfamily. Heterodimer of AddA and AddB/RexB. Mg(2+) serves as cofactor.

It carries out the reaction Couples ATP hydrolysis with the unwinding of duplex DNA by translocating in the 3'-5' direction.. The enzyme catalyses ATP + H2O = ADP + phosphate + H(+). Functionally, the heterodimer acts as both an ATP-dependent DNA helicase and an ATP-dependent, dual-direction single-stranded exonuclease. Recognizes the chi site generating a DNA molecule suitable for the initiation of homologous recombination. The AddA nuclease domain is required for chi fragment generation; this subunit has the helicase and 3' -&gt; 5' nuclease activities. The protein is ATP-dependent helicase/nuclease subunit A of Streptococcus pneumoniae (strain ATCC 700669 / Spain 23F-1).